A 481-amino-acid polypeptide reads, in one-letter code: Argininosuccinate lyase (481 aa).

This sequence belongs to the lyase 1 family. Argininosuccinate lyase subfamily.

Its subcellular location is the cytoplasm. It carries out the reaction 2-(N(omega)-L-arginino)succinate = fumarate + L-arginine. It participates in amino-acid biosynthesis; L-arginine biosynthesis; L-arginine from L-ornithine and carbamoyl phosphate: step 3/3. The protein is Argininosuccinate lyase of Methanococcus maripaludis (strain C5 / ATCC BAA-1333).